Consider the following 266-residue polypeptide: MLKVEPIPAFQDNYIWAIHDGHCAAVVDPGEAAPVERFLAQSGLALGAIVITHHHGDHQGGVAGLLAAHPRAPSGGPLPVLGPAGERIGGRTQALREGDVATLEAPALTLRVLDVPGHTAGHIAYVADLGEAGPALFCGDTLFASGCGRLFEGTPAQMLASLDKLAALPGDTRVYCAHEYTRSNVRFARAVEPGNAALAAWEARVEALRATNQPTLPTTIAHERQVNPFLRSREPAVRAAVSAHGGTAADDAQNFGALRGWKDNFR.

Zn(2+)-binding residues include histidine 53, histidine 55, aspartate 57, histidine 58, histidine 118, aspartate 140, and histidine 178.

Belongs to the metallo-beta-lactamase superfamily. Glyoxalase II family. As to quaternary structure, monomer. Requires Zn(2+) as cofactor.

It carries out the reaction an S-(2-hydroxyacyl)glutathione + H2O = a 2-hydroxy carboxylate + glutathione + H(+). It functions in the pathway secondary metabolite metabolism; methylglyoxal degradation; (R)-lactate from methylglyoxal: step 2/2. Functionally, thiolesterase that catalyzes the hydrolysis of S-D-lactoyl-glutathione to form glutathione and D-lactic acid. The protein is Hydroxyacylglutathione hydrolase of Cupriavidus taiwanensis (strain DSM 17343 / BCRC 17206 / CCUG 44338 / CIP 107171 / LMG 19424 / R1) (Ralstonia taiwanensis (strain LMG 19424)).